The following is a 425-amino-acid chain: Dihydroorotase (425 aa).

H59 and H61 together coordinate Zn(2+). Residues 61–63 and N93 contribute to the substrate site; that span reads HLR. Residues D151, H178, and H231 each coordinate Zn(2+). N277 provides a ligand contact to substrate. D304 is a Zn(2+) binding site. D304 is an active-site residue. Substrate is bound by residues H308 and 322-323; that span reads FG.

Belongs to the metallo-dependent hydrolases superfamily. DHOase family. Class I DHOase subfamily. The cofactor is Zn(2+).

The enzyme catalyses (S)-dihydroorotate + H2O = N-carbamoyl-L-aspartate + H(+). Its pathway is pyrimidine metabolism; UMP biosynthesis via de novo pathway; (S)-dihydroorotate from bicarbonate: step 3/3. Its function is as follows. Catalyzes the reversible cyclization of carbamoyl aspartate to dihydroorotate. The sequence is that of Dihydroorotase from Staphylococcus epidermidis (strain ATCC 12228 / FDA PCI 1200).